The primary structure comprises 205 residues: MTKRNEAKYKIDRRMGQNIWGRPKSPVNKREYGPGQHGQRRKGKLSDFGTQLRAKQKLKGYYANISERQFYAVYVEATRLKGDSGENLIGLLERRLDAIVYRAKFVPTMFAARQFINHGHIKVNGKRVNIPSYKVKVGDVIEVKDASKQLALVLEANQLAERDVPDFLDVDHGKQTAKFTRIPSLSEVPFPVQMEPHLIIEFYSR.

Residues 18-49 form a disordered region; sequence NIWGRPKSPVNKREYGPGQHGQRRKGKLSDFG. Positions 94-157 constitute an S4 RNA-binding domain; the sequence is RRLDAIVYRA…KQLALVLEAN (64 aa).

This sequence belongs to the universal ribosomal protein uS4 family. In terms of assembly, part of the 30S ribosomal subunit. Contacts protein S5. The interaction surface between S4 and S5 is involved in control of translational fidelity.

Functionally, one of the primary rRNA binding proteins, it binds directly to 16S rRNA where it nucleates assembly of the body of the 30S subunit. With S5 and S12 plays an important role in translational accuracy. The protein is Small ribosomal subunit protein uS4 of Afipia carboxidovorans (strain ATCC 49405 / DSM 1227 / KCTC 32145 / OM5) (Oligotropha carboxidovorans).